The sequence spans 192 residues: Der GTPase-activating protein YihI (192 aa).

Residues 1 to 80 (MSRTKKTRRI…KAAVKEVKDP (80 aa)) form a disordered region. 3 stretches are compositionally biased toward basic and acidic residues: residues 9 to 25 (RITD…KPEQ), 37 to 48 (TRYELDAKAREE), and 65 to 80 (DPAE…VKDP).

It belongs to the YihI family. As to quaternary structure, interacts with Der.

A GTPase-activating protein (GAP) that modifies Der/EngA GTPase function. May play a role in ribosome biogenesis. The polypeptide is Der GTPase-activating protein YihI (Actinobacillus pleuropneumoniae serotype 7 (strain AP76)).